The following is a 163-amino-acid chain: MGTSEAAPPPFARVAPALFIGNARAAGATELLVRAGITLCVNVSRQQPGPRAPGVAELRVPVFDDPAEDLLTHLEPTCAAMEAAVRDGGSCLVYCKNGRSRSAAVCTAYLMRHRGHSLDRAFQMVKSARPVAEPNLGFWAQLQKYEQTLQAQAILPREPIDPE.

Residues 10-151 (PFARVAPALF…LQKYEQTLQA (142 aa)) enclose the Tyrosine-protein phosphatase domain. C95 (phosphocysteine intermediate) is an active-site residue.

Belongs to the protein-tyrosine phosphatase family. Non-receptor class dual specificity subfamily. Monomer.

The enzyme catalyses O-phospho-L-tyrosyl-[protein] + H2O = L-tyrosyl-[protein] + phosphate. It carries out the reaction O-phospho-L-seryl-[protein] + H2O = L-seryl-[protein] + phosphate. It catalyses the reaction O-phospho-L-threonyl-[protein] + H2O = L-threonyl-[protein] + phosphate. In terms of biological role, has phosphatase activity with the synthetic substrate 6,8-difluoro-4-methylumbelliferyl phosphate (in vitro). Has almost no detectable activity with phosphotyrosine, even less activity with phosphothreonine and displays complete lack of activity with phosphoserine. The poor activity with phosphotyrosine may be due to steric hindrance by bulky amino acid sidechains that obstruct access to the active site. This chain is Dual specificity phosphatase 28 (Dusp28), found in Mus musculus (Mouse).